A 266-amino-acid polypeptide reads, in one-letter code: Exosome complex component Rrp42 (266 aa).

This sequence belongs to the RNase PH family. Rrp42 subfamily. Component of the archaeal exosome complex. Forms a hexameric ring-like arrangement composed of 3 Rrp41-Rrp42 heterodimers. The hexameric ring associates with a trimer of Rrp4 and/or Csl4 subunits.

The protein resides in the cytoplasm. Non-catalytic component of the exosome, which is a complex involved in RNA degradation. Contributes to the structuring of the Rrp41 active site. In Methanosarcina acetivorans (strain ATCC 35395 / DSM 2834 / JCM 12185 / C2A), this protein is Exosome complex component Rrp42.